The primary structure comprises 693 residues: Elongation factor G (693 aa).

The region spanning aspartate 8–threonine 284 is the tr-type G domain. Residues alanine 17 to threonine 24, aspartate 81 to histidine 85, and asparagine 135 to aspartate 138 each bind GTP.

This sequence belongs to the TRAFAC class translation factor GTPase superfamily. Classic translation factor GTPase family. EF-G/EF-2 subfamily.

It is found in the cytoplasm. Functionally, catalyzes the GTP-dependent ribosomal translocation step during translation elongation. During this step, the ribosome changes from the pre-translocational (PRE) to the post-translocational (POST) state as the newly formed A-site-bound peptidyl-tRNA and P-site-bound deacylated tRNA move to the P and E sites, respectively. Catalyzes the coordinated movement of the two tRNA molecules, the mRNA and conformational changes in the ribosome. The polypeptide is Elongation factor G (Fusobacterium nucleatum subsp. nucleatum (strain ATCC 25586 / DSM 15643 / BCRC 10681 / CIP 101130 / JCM 8532 / KCTC 2640 / LMG 13131 / VPI 4355)).